The primary structure comprises 435 residues: Matrix remodeling-associated protein 8 (435 aa).

An N-terminal signal peptide occupies residues 1–22; sequence MEIRCKVLVCHIILLHSATVYL. At 23 to 337 the chain is on the extracellular side; it reads YSVPASQQNP…QESRLHFFQQ (315 aa). Ig-like V-type domains lie at 32-158 and 156-293; these read PESV…LNIT and NITK…LSVS. Residues Asn-41, Asn-120, Asn-156, Asn-245, and Asn-324 are each glycosylated (N-linked (GlcNAc...) asparagine). Cysteines 54 and 138 form a disulfide. The cysteines at positions 187 and 273 are disulfide-linked. Residues 338-358 traverse the membrane as a helical segment; it reads LGYILATLLLFILLLTAVILI. At 359–435 the chain is on the cytoplasmic side; sequence TRKHQKRGYA…DLELRKEYCK (77 aa).

Homodimer in cis. Does not appear to form trans-homodimers.

It localises to the cell membrane. Transmembrane protein which can modulate activity of various signaling pathways, probably via binding to integrin ITGAV:ITGB3. Mediates heterophilic cell-cell interactions in vitro. This chain is Matrix remodeling-associated protein 8 (mxra8), found in Xenopus laevis (African clawed frog).